A 355-amino-acid polypeptide reads, in one-letter code: Isopentenyl-diphosphate delta-isomerase (355 aa).

12 to 13 (RK) serves as a coordination point for substrate. FMN contacts are provided by residues Ser-70, 71 to 73 (SMT), Ser-101, and Asn-130. 101 to 103 (SMR) contacts substrate. Substrate is bound at residue Gln-165. A Mg(2+)-binding site is contributed by Glu-166. FMN-binding positions include Lys-197 and 308–309 (AG).

Belongs to the IPP isomerase type 2 family. Homooctamer. Dimer of tetramers. The cofactor is FMN. NADPH serves as cofactor. Mg(2+) is required as a cofactor.

The protein localises to the cytoplasm. The enzyme catalyses isopentenyl diphosphate = dimethylallyl diphosphate. In terms of biological role, involved in the biosynthesis of isoprenoids. Catalyzes the 1,3-allylic rearrangement of the homoallylic substrate isopentenyl (IPP) to its allylic isomer, dimethylallyl diphosphate (DMAPP). This Chlorobium phaeovibrioides (strain DSM 265 / 1930) (Prosthecochloris vibrioformis (strain DSM 265)) protein is Isopentenyl-diphosphate delta-isomerase.